We begin with the raw amino-acid sequence, 249 residues long: Proteasome subunit alpha (249 aa).

It belongs to the peptidase T1A family. The 20S proteasome core is composed of 14 alpha and 14 beta subunits that assemble into four stacked heptameric rings, resulting in a barrel-shaped structure. The two inner rings, each composed of seven catalytic beta subunits, are sandwiched by two outer rings, each composed of seven alpha subunits. The catalytic chamber with the active sites is on the inside of the barrel. Has a gated structure, the ends of the cylinder being occluded by the N-termini of the alpha-subunits. Is capped at one or both ends by the proteasome regulatory ATPase, PAN.

The protein resides in the cytoplasm. With respect to regulation, the formation of the proteasomal ATPase PAN-20S proteasome complex, via the docking of the C-termini of PAN into the intersubunit pockets in the alpha-rings, triggers opening of the gate for substrate entry. Interconversion between the open-gate and close-gate conformations leads to a dynamic regulation of the 20S proteasome proteolysis activity. Functionally, component of the proteasome core, a large protease complex with broad specificity involved in protein degradation. This Methanosarcina mazei (strain ATCC BAA-159 / DSM 3647 / Goe1 / Go1 / JCM 11833 / OCM 88) (Methanosarcina frisia) protein is Proteasome subunit alpha.